Consider the following 537-residue polypeptide: Serendipity locus protein alpha (537 aa).

It localises to the cytoplasm. It is found in the cell membrane. Its function is as follows. Required for the cellularization of the syncytial blastoderm embryo. Involved in the localization of the actin filaments just prior to and during plasma membrane invagination. Sry-alpha together with nullo and bnk may provide auxiliary functions, by acting both to stabilize a large and dynamic microfilament structure and regulate its functions. The sequence is that of Serendipity locus protein alpha (Sry-alpha) from Drosophila virilis (Fruit fly).